Consider the following 221-residue polypeptide: UPF0758 protein YicR (221 aa).

Residues Ala99–Ile221 form the MPN domain. His170, His172, and Asp183 together coordinate Zn(2+). Residues His170–Asp183 carry the JAMM motif motif.

Belongs to the UPF0758 family. YicR subfamily.

The polypeptide is UPF0758 protein YicR (Salmonella agona (strain SL483)).